A 504-amino-acid chain; its full sequence is Cytochrome P450 3A2 (504 aa).

Cys-443 contacts heme.

This sequence belongs to the cytochrome P450 family. Heme is required as a cofactor. As to expression, expressed in liver.

It is found in the endoplasmic reticulum membrane. The protein resides in the microsome membrane. The catalysed reaction is an organic molecule + reduced [NADPH--hemoprotein reductase] + O2 = an alcohol + oxidized [NADPH--hemoprotein reductase] + H2O + H(+). Its function is as follows. Cytochromes P450 are a group of heme-thiolate monooxygenases. In liver microsomes, this enzyme is involved in an NADPH-dependent electron transport pathway. It oxidizes a variety of structurally unrelated compounds, including steroids, fatty acids, and xenobiotics. This chain is Cytochrome P450 3A2 (Cyp3a2), found in Rattus norvegicus (Rat).